The primary structure comprises 287 residues: Neugrin (287 aa).

The signal sequence occupies residues 1 to 23 (MAFSPNVLLGGRVCAAVARSGFA). The interval 149–169 (SIPELPGPGDSSKPLSAGQSV) is disordered. Asn-202 carries an N-linked (GlcNAc...) asparagine glycan.

Belongs to the neugrin family. Forms a regulatory protein-RNA complex, consisting of RCC1L, NGRN, RPUSD3, RPUSD4, TRUB2, FASTKD2 and 16S mt-rRNA. Interacts with 16S mt-rRNA; this interaction is direct.

The protein localises to the nucleus. It localises to the secreted. The protein resides in the mitochondrion membrane. Its function is as follows. Plays an essential role in mitochondrial ribosome biogenesis. As a component of a functional protein-RNA module, consisting of RCC1L, NGRN, RPUSD3, RPUSD4, TRUB2, FASTKD2 and 16S mitochondrial ribosomal RNA (16S mt-rRNA), controls 16S mt-rRNA abundance and is required for intra-mitochondrial translation of core subunits of the oxidative phosphorylation system. In Bos taurus (Bovine), this protein is Neugrin (NGRN).